The following is a 176-amino-acid chain: uncharacterized protein (176 aa).

An N-terminal signal peptide occupies residues 1-20; that stretch reads MIKKISIILITLFIIQLTKS. The tract at residues 26–46 is disordered; it reads NNNNNNNNNNNNNNNNNNNNN. Asn-120 carries N-linked (GlcNAc...) asparagine glycosylation.

Belongs to the Dictyostelium gerABC family.

Its subcellular location is the secreted. This is an uncharacterized protein from Dictyostelium discoideum (Social amoeba).